Reading from the N-terminus, the 251-residue chain is MAPGYQPPSPEEKEQYVRELFDKIAENYDAMNQVMSAGQWEKWHREFVAQTHFRPGDHILDVACGTGDLTLLDAAQVAPDGKVIGVDISEGMLEVGRRRVAASPYKDLITLQLGNAMDLPFPDNTFDGVTMGWAMRNVASIPRTLSEIYRVLKPGGRFICLEASKPFSRFIRFGFFVYWKTFLPLIDWFVVKAGRQAKVRPYTYLSRSLDNYPFPDQLEELFREAGFVETDYQLLMLGTVAIHVGTKRREG.

S-adenosyl-L-methionine is bound by residues Thr66, Asp87, and 115–116 (NA).

This sequence belongs to the class I-like SAM-binding methyltransferase superfamily. MenG/UbiE family.

It catalyses the reaction a 2-demethylmenaquinol + S-adenosyl-L-methionine = a menaquinol + S-adenosyl-L-homocysteine + H(+). It participates in quinol/quinone metabolism; menaquinone biosynthesis; menaquinol from 1,4-dihydroxy-2-naphthoate: step 2/2. Its function is as follows. Methyltransferase required for the conversion of demethylmenaquinol (DMKH2) to menaquinol (MKH2). The sequence is that of Demethylmenaquinone methyltransferase from Symbiobacterium thermophilum (strain DSM 24528 / JCM 14929 / IAM 14863 / T).